A 431-amino-acid polypeptide reads, in one-letter code: Glycerol-3-phosphate dehydrogenase [NAD(P)+] (431 aa).

Polar residues predominate over residues 1–19; sequence MTSANDKSTDTNVDSTQAE. Positions 1-25 are disordered; that stretch reads MTSANDKSTDTNVDSTQAEQKMAEK. 4 residues coordinate NADPH: serine 79, phenylalanine 80, arginine 100, and lysine 173. Lysine 173 and glycine 201 together coordinate sn-glycerol 3-phosphate. Alanine 205 serves as a coordination point for NADPH. Positions 256, 309, 319, 320, and 321 each coordinate sn-glycerol 3-phosphate. The Proton acceptor role is filled by lysine 256. NADPH is bound at residue arginine 320. Glutamate 346 is an NADPH binding site.

Belongs to the NAD-dependent glycerol-3-phosphate dehydrogenase family.

It is found in the cytoplasm. It carries out the reaction sn-glycerol 3-phosphate + NAD(+) = dihydroxyacetone phosphate + NADH + H(+). It catalyses the reaction sn-glycerol 3-phosphate + NADP(+) = dihydroxyacetone phosphate + NADPH + H(+). It functions in the pathway membrane lipid metabolism; glycerophospholipid metabolism. In terms of biological role, catalyzes the reduction of the glycolytic intermediate dihydroxyacetone phosphate (DHAP) to sn-glycerol 3-phosphate (G3P), the key precursor for phospholipid synthesis. The polypeptide is Glycerol-3-phosphate dehydrogenase [NAD(P)+] (Psychrobacter arcticus (strain DSM 17307 / VKM B-2377 / 273-4)).